The following is a 232-amino-acid chain: Ubiquinone biosynthesis O-methyltransferase (232 aa).

Positions 36, 55, 76, and 120 each coordinate S-adenosyl-L-methionine.

Belongs to the methyltransferase superfamily. UbiG/COQ3 family.

It carries out the reaction a 3-demethylubiquinol + S-adenosyl-L-methionine = a ubiquinol + S-adenosyl-L-homocysteine + H(+). The catalysed reaction is a 3-(all-trans-polyprenyl)benzene-1,2-diol + S-adenosyl-L-methionine = a 2-methoxy-6-(all-trans-polyprenyl)phenol + S-adenosyl-L-homocysteine + H(+). Its pathway is cofactor biosynthesis; ubiquinone biosynthesis. Its function is as follows. O-methyltransferase that catalyzes the 2 O-methylation steps in the ubiquinone biosynthetic pathway. This chain is Ubiquinone biosynthesis O-methyltransferase, found in Pseudomonas fluorescens (strain SBW25).